The sequence spans 107 residues: U1-lycotoxin-Ls1v (107 aa).

The signal sequence occupies residues 1 to 20 (MMKVLVVVALLVTLISYSSS). Positions 21-41 (EGIDDLEADELLSLTANEQTR) are excised as a propeptide. Disulfide bonds link C44–C59, C51–C68, C58–C86, and C70–C84.

It belongs to the neurotoxin 19 (CSTX) family. 04 (U1-Lctx) subfamily. Expressed by the venom gland.

The protein resides in the secreted. The sequence is that of U1-lycotoxin-Ls1v from Lycosa singoriensis (Wolf spider).